The following is a 535-amino-acid chain: CTP synthase (535 aa).

The tract at residues 1–266 (MKFVVITGGV…GDYICERLGL (266 aa)) is amidoligase domain. Serine 12 lines the CTP pocket. Residue serine 12 participates in UTP binding. ATP is bound by residues 13–18 (GIGKGI) and aspartate 70. Residues aspartate 70 and glutamate 140 each coordinate Mg(2+). Residues 147-149 (DIE), 187-192 (KTKPTQ), and lysine 223 contribute to the CTP site. UTP-binding positions include 187 to 192 (KTKPTQ) and lysine 223. Residues 291–535 (RIAVVGKYVD…IKAAAGQGPD (245 aa)) form the Glutamine amidotransferase type-1 domain. Glycine 355 is an L-glutamine binding site. Catalysis depends on cysteine 382, which acts as the Nucleophile; for glutamine hydrolysis. L-glutamine is bound by residues 383–386 (LGFQ), glutamate 406, and arginine 464. Active-site residues include histidine 508 and glutamate 510.

Belongs to the CTP synthase family. In terms of assembly, homotetramer.

The catalysed reaction is UTP + L-glutamine + ATP + H2O = CTP + L-glutamate + ADP + phosphate + 2 H(+). It catalyses the reaction L-glutamine + H2O = L-glutamate + NH4(+). It carries out the reaction UTP + NH4(+) + ATP = CTP + ADP + phosphate + 2 H(+). It functions in the pathway pyrimidine metabolism; CTP biosynthesis via de novo pathway; CTP from UDP: step 2/2. With respect to regulation, allosterically activated by GTP, when glutamine is the substrate; GTP has no effect on the reaction when ammonia is the substrate. The allosteric effector GTP functions by stabilizing the protein conformation that binds the tetrahedral intermediate(s) formed during glutamine hydrolysis. Inhibited by the product CTP, via allosteric rather than competitive inhibition. Its function is as follows. Catalyzes the ATP-dependent amination of UTP to CTP with either L-glutamine or ammonia as the source of nitrogen. Regulates intracellular CTP levels through interactions with the four ribonucleotide triphosphates. The polypeptide is CTP synthase (Methanopyrus kandleri (strain AV19 / DSM 6324 / JCM 9639 / NBRC 100938)).